The sequence spans 346 residues: Peroxidase 19 (346 aa).

The N-terminal stretch at 1-31 is a signal peptide; the sequence is MHVISLSLSSIFFFLFLTSTILISPVQPTTS. 4 disulfides stabilise this stretch: Cys-51–Cys-134, Cys-84–Cys-89, Cys-140–Cys-342, and Cys-219–Cys-251. His-82 (proton acceptor) is an active-site residue. Ca(2+) contacts are provided by Asp-83, Val-86, Gly-88, Asp-90, and Ser-92. Pro-182 is a binding site for substrate. An N-linked (GlcNAc...) asparagine glycan is attached at Asn-185. Residue His-212 participates in heme b binding. A Ca(2+)-binding site is contributed by Thr-213. Ca(2+) is bound by residues Asp-265, Thr-268, and Asp-273.

This sequence belongs to the peroxidase family. Classical plant (class III) peroxidase subfamily. Heme b serves as cofactor. The cofactor is Ca(2+).

The protein resides in the secreted. The catalysed reaction is 2 a phenolic donor + H2O2 = 2 a phenolic radical donor + 2 H2O. Its function is as follows. Removal of H(2)O(2), oxidation of toxic reductants, biosynthesis and degradation of lignin, suberization, auxin catabolism, response to environmental stresses such as wounding, pathogen attack and oxidative stress. These functions might be dependent on each isozyme/isoform in each plant tissue. In Arabidopsis thaliana (Mouse-ear cress), this protein is Peroxidase 19 (PER19).